A 624-amino-acid chain; its full sequence is uncharacterized protein (624 aa).

The disordered stretch occupies residues 113 to 249 (SINVRTSATT…RFHPVTDINK (137 aa)). A compositionally biased stretch (low complexity) spans 118–225 (TSATTTESTN…ATTTESTNAS (108 aa)). The segment covering 226–249 (AKEDANKDGNAEDNRFHPVTDINK) has biased composition (basic and acidic residues).

This is an uncharacterized protein from Saccharomyces cerevisiae (strain ATCC 204508 / S288c) (Baker's yeast).